Here is a 257-residue protein sequence, read N- to C-terminus: Cobalt transport protein CbiM (257 aa).

Positions 1-33 are cleaved as a signal peptide; it reads MVKPTQAKRYASLGAIALLTTSLVVASPNPALA. A run of 6 helical transmembrane segments spans residues 39-59, 74-94, 117-137, 138-158, 171-191, and 214-234; these read GFLP…FLAW, SVLL…LKIP, LMAV…AHGG, LTTL…LAWL, AIAL…LTSL, and LFAV…VLVW.

This sequence belongs to the CbiM family. As to quaternary structure, forms an energy-coupling factor (ECF) transporter complex composed of an ATP-binding protein (A component, CbiO), a transmembrane protein (T component, CbiQ) and 2 possible substrate-capture proteins (S components, CbiM and CbiN) of unknown stoichimetry.

It is found in the cell inner membrane. It functions in the pathway cofactor biosynthesis; adenosylcobalamin biosynthesis. Its function is as follows. Part of the energy-coupling factor (ECF) transporter complex CbiMNOQ involved in cobalt import. The polypeptide is Cobalt transport protein CbiM (Thermosynechococcus vestitus (strain NIES-2133 / IAM M-273 / BP-1)).